We begin with the raw amino-acid sequence, 319 residues long: D-ribose/D-allose-binding protein (319 aa).

The N-terminal stretch at 1–29 is a signal peptide; it reads MKRVASRRLLAAVVLTACSSFLPLSAVHA.

It belongs to the bacterial solute-binding protein 2 family.

Its subcellular location is the periplasm. Functionally, binds specifically both D-ribose and D-allose, with affinities in the lower micromolar range. The polypeptide is D-ribose/D-allose-binding protein (Pseudomonas aeruginosa (strain ATCC 15692 / DSM 22644 / CIP 104116 / JCM 14847 / LMG 12228 / 1C / PRS 101 / PAO1)).